The sequence spans 267 residues: Tryptophan synthase alpha chain (267 aa).

Residues E49 and D60 each act as proton acceptor in the active site.

This sequence belongs to the TrpA family. As to quaternary structure, tetramer of two alpha and two beta chains.

The catalysed reaction is (1S,2R)-1-C-(indol-3-yl)glycerol 3-phosphate + L-serine = D-glyceraldehyde 3-phosphate + L-tryptophan + H2O. It participates in amino-acid biosynthesis; L-tryptophan biosynthesis; L-tryptophan from chorismate: step 5/5. Functionally, the alpha subunit is responsible for the aldol cleavage of indoleglycerol phosphate to indole and glyceraldehyde 3-phosphate. In Salinispora arenicola (strain CNS-205), this protein is Tryptophan synthase alpha chain.